The primary structure comprises 54 residues: Large ribosomal subunit protein bL33 (54 aa).

This sequence belongs to the bacterial ribosomal protein bL33 family.

The polypeptide is Large ribosomal subunit protein bL33 (Buchnera aphidicola subsp. Cinara cedri (strain Cc)).